The primary structure comprises 572 residues: Urease subunit alpha (572 aa).

Residues 136-572 form the Urease domain; sequence GGIDTHIHFI…VPLGQRYFLF (437 aa). The Ni(2+) site is built by His141, His143, and Lys224. At Lys224 the chain carries N6-carboxylysine. His226 serves as a coordination point for substrate. Ni(2+)-binding residues include His253 and His279. His327 functions as the Proton donor in the catalytic mechanism. Ni(2+) is bound at residue Asp367.

This sequence belongs to the metallo-dependent hydrolases superfamily. Urease alpha subunit family. Heterotrimer of UreA (gamma), UreB (beta) and UreC (alpha) subunits. Three heterotrimers associate to form the active enzyme. Requires Ni cation as cofactor. In terms of processing, carboxylation allows a single lysine to coordinate two nickel ions.

The protein resides in the cytoplasm. The enzyme catalyses urea + 2 H2O + H(+) = hydrogencarbonate + 2 NH4(+). The protein operates within nitrogen metabolism; urea degradation; CO(2) and NH(3) from urea (urease route): step 1/1. The sequence is that of Urease subunit alpha from Haemophilus influenzae (strain 86-028NP).